A 323-amino-acid chain; its full sequence is Protein SopB (323 aa).

The interval Met-1–Thr-20 is disordered. The span at Thr-11–Thr-20 shows a compositional bias: polar residues. Positions Ser-180–Thr-199 form a DNA-binding region, H-T-H motif.

The protein belongs to the ParB family.

Functionally, control of plasmid partitioning; required to recognize the cis-acting. Binds specifically with the DNA segment containing the sopC region. SopB is trans-acting. This chain is Protein SopB (sopB), found in Escherichia coli O157:H7.